Here is a 340-residue protein sequence, read N- to C-terminus: Aldo-keto reductase yakc [NADP(+)] (340 aa).

Tyr56 functions as the Proton donor in the catalytic mechanism. Residue His126 participates in substrate binding. 208 to 218 serves as a coordination point for NADP(+); it reads APLGRGFLTGA.

It belongs to the aldo/keto reductase family. Aldo/keto reductase 2 subfamily. As to quaternary structure, monomer.

This Schizosaccharomyces pombe (strain 972 / ATCC 24843) (Fission yeast) protein is Aldo-keto reductase yakc [NADP(+)] (yakc).